Consider the following 97-residue polypeptide: Integration host factor subunit alpha (97 aa).

Residues 49–71 form a disordered region; that stretch reads FGNFDLRDKNQRPGRNPKTGEDI.

This sequence belongs to the bacterial histone-like protein family. Heterodimer of an alpha and a beta chain.

Functionally, this protein is one of the two subunits of integration host factor, a specific DNA-binding protein that functions in genetic recombination as well as in transcriptional and translational control. The polypeptide is Integration host factor subunit alpha (Shewanella woodyi (strain ATCC 51908 / MS32)).